Reading from the N-terminus, the 493-residue chain is Alpha-amylase-related protein (493 aa).

Residues 1 to 19 (MFKFALTLTLCLAGSLSLA) form the signal peptide. Position 20 is a pyrrolidone carboxylic acid (glutamine 20). Cysteine 47 and cysteine 103 are disulfide-bonded. Asparagine 117, glutamine 168, and aspartate 177 together coordinate Ca(2+). A disulfide bond links cysteine 156 and cysteine 170. Arginine 205 contacts chloride. Aspartate 207 functions as the Nucleophile in the catalytic mechanism. Ca(2+) is bound at residue histidine 211. The active-site Proton donor is the glutamate 244. 2 residues coordinate chloride: asparagine 307 and arginine 342. 3 disulfides stabilise this stretch: cysteine 375-cysteine 381, cysteine 417-cysteine 440, and cysteine 447-cysteine 459.

Belongs to the glycosyl hydrolase 13 family. As to quaternary structure, monomer. Requires Ca(2+) as cofactor. The cofactor is chloride.

The protein localises to the secreted. It catalyses the reaction Endohydrolysis of (1-&gt;4)-alpha-D-glucosidic linkages in polysaccharides containing three or more (1-&gt;4)-alpha-linked D-glucose units.. This is Alpha-amylase-related protein (Amyrel) from Drosophila simulans (Fruit fly).